Here is a 63-residue protein sequence, read N- to C-terminus: Large ribosomal subunit protein bL35 (63 aa).

Residues 24–44 (RAKAYRSHRATGKTTKQKRQL) form a disordered region.

It belongs to the bacterial ribosomal protein bL35 family.

The protein is Large ribosomal subunit protein bL35 of Mycoplasma mycoides subsp. mycoides SC (strain CCUG 32753 / NCTC 10114 / PG1).